The following is an 87-amino-acid chain: Cell division topological specificity factor (87 aa).

The protein belongs to the MinE family.

Prevents the cell division inhibition by proteins MinC and MinD at internal division sites while permitting inhibition at polar sites. This ensures cell division at the proper site by restricting the formation of a division septum at the midpoint of the long axis of the cell. The protein is Cell division topological specificity factor of Aliivibrio fischeri (strain ATCC 700601 / ES114) (Vibrio fischeri).